A 320-amino-acid chain; its full sequence is UV DNA damage endonuclease (320 aa).

This sequence belongs to the uve1/UvsE family.

Functionally, component in a DNA repair pathway. Removal of UV LIGHT damaged nucleotides. Recognizes pyrimidine dimers and cleave a phosphodiester bond immediately 5' to the lesion. This Bacillus velezensis (strain DSM 23117 / BGSC 10A6 / LMG 26770 / FZB42) (Bacillus amyloliquefaciens subsp. plantarum) protein is UV DNA damage endonuclease.